A 546-amino-acid chain; its full sequence is Protein HydE (546 aa).

The chain is Protein HydE (hydE) from Wolinella succinogenes (strain ATCC 29543 / DSM 1740 / CCUG 13145 / JCM 31913 / LMG 7466 / NCTC 11488 / FDC 602W) (Vibrio succinogenes).